The sequence spans 437 residues: Serine carboxypeptidase-like 9 (437 aa).

The signal sequence occupies residues 1–21 (MSLILKFMLLILLVSSHHVRS). A glycan (N-linked (GlcNAc...) asparagine) is linked at Asn-101. The active site involves Ser-175. 2 disulfides stabilise this stretch: Cys-243–Cys-257 and Cys-281–Cys-293. Residues Asn-307 and Asn-346 are each glycosylated (N-linked (GlcNAc...) asparagine). Asp-362 is a catalytic residue. Asn-378 carries an N-linked (GlcNAc...) asparagine glycan. His-415 is an active-site residue.

Belongs to the peptidase S10 family. As to expression, expressed in seedlings, leaves, flowers and siliques.

It is found in the secreted. It catalyses the reaction 2 1-O-(trans-sinapoyl)-beta-D-glucose = 1,2-di-O-sinapoyl beta-D-glucose + D-glucose. Catalyzes the formation of 1,2-bis-O-sinapoyl beta-D-glucoside and an unidentified compound 1. This Arabidopsis thaliana (Mouse-ear cress) protein is Serine carboxypeptidase-like 9 (SCPL9).